Consider the following 407-residue polypeptide: Imidazolonepropionase (407 aa).

Residues His68 and His70 each coordinate Fe(3+). The Zn(2+) site is built by His68 and His70. 4-imidazolone-5-propanoate contacts are provided by Arg77, Tyr140, and His173. An N-formimidoyl-L-glutamate-binding site is contributed by Tyr140. His238 serves as a coordination point for Fe(3+). His238 is a Zn(2+) binding site. Gln241 is a binding site for 4-imidazolone-5-propanoate. Asp313 contacts Fe(3+). Asp313 contacts Zn(2+). Asn315 and Gly317 together coordinate N-formimidoyl-L-glutamate. Residue Thr318 participates in 4-imidazolone-5-propanoate binding.

It belongs to the metallo-dependent hydrolases superfamily. HutI family. The cofactor is Zn(2+). Fe(3+) is required as a cofactor.

Its subcellular location is the cytoplasm. The catalysed reaction is 4-imidazolone-5-propanoate + H2O = N-formimidoyl-L-glutamate. It functions in the pathway amino-acid degradation; L-histidine degradation into L-glutamate; N-formimidoyl-L-glutamate from L-histidine: step 3/3. Functionally, catalyzes the hydrolytic cleavage of the carbon-nitrogen bond in imidazolone-5-propanoate to yield N-formimidoyl-L-glutamate. It is the third step in the universal histidine degradation pathway. The protein is Imidazolonepropionase of Burkholderia lata (strain ATCC 17760 / DSM 23089 / LMG 22485 / NCIMB 9086 / R18194 / 383).